The sequence spans 1405 residues: DNA-directed RNA polymerase subunit beta' (1405 aa).

Zn(2+) contacts are provided by Cys70, Cys72, Cys85, and Cys88. Mg(2+)-binding residues include Asp460, Asp462, and Asp464. Positions 815, 890, 897, and 900 each coordinate Zn(2+).

This sequence belongs to the RNA polymerase beta' chain family. As to quaternary structure, the RNAP catalytic core consists of 2 alpha, 1 beta, 1 beta' and 1 omega subunit. When a sigma factor is associated with the core the holoenzyme is formed, which can initiate transcription. The cofactor is Mg(2+). Requires Zn(2+) as cofactor.

The catalysed reaction is RNA(n) + a ribonucleoside 5'-triphosphate = RNA(n+1) + diphosphate. Its function is as follows. DNA-dependent RNA polymerase catalyzes the transcription of DNA into RNA using the four ribonucleoside triphosphates as substrates. The protein is DNA-directed RNA polymerase subunit beta' of Xanthomonas campestris pv. campestris (strain B100).